The following is a 359-amino-acid chain: N-acetyl-gamma-glutamyl-phosphate reductase (359 aa).

Cys-162 is an active-site residue.

The protein belongs to the NAGSA dehydrogenase family. Type 1 subfamily.

It localises to the cytoplasm. It catalyses the reaction N-acetyl-L-glutamate 5-semialdehyde + phosphate + NADP(+) = N-acetyl-L-glutamyl 5-phosphate + NADPH + H(+). The protein operates within amino-acid biosynthesis; L-arginine biosynthesis; N(2)-acetyl-L-ornithine from L-glutamate: step 3/4. Its function is as follows. Catalyzes the NADPH-dependent reduction of N-acetyl-5-glutamyl phosphate to yield N-acetyl-L-glutamate 5-semialdehyde. The sequence is that of N-acetyl-gamma-glutamyl-phosphate reductase from Prochlorococcus marinus (strain NATL2A).